The following is a 504-amino-acid chain: GTPase Obg (504 aa).

Residues 2–159 form the Obg domain; it reads SQFVDRVVLH…KDVTLELKSM (158 aa). The interval 68 to 88 is disordered; sequence AERGNNGAGDDRHGARGKDLT. Residues 160 to 340 form the OBG-type G domain; sequence ADVGLVGFPS…LRFALMDIVR (181 aa). Residues 166–173, 191–195, 212–215, 292–295, and 321–323 each bind GTP; these read GFPSAGKS, FTTLA, DVPG, NKMD, and STV. Residues Ser-173 and Thr-193 each coordinate Mg(2+). One can recognise an OCT domain in the interval 364-444; sequence KRKGRFADFE…IGGITFEWDP (81 aa). The interval 449–481 is disordered; sequence GVDQTPAYGRGKDRRLEQTDRVTAEQRKRASQA. Positions 458–476 are enriched in basic and acidic residues; the sequence is RGKDRRLEQTDRVTAEQRK.

Belongs to the TRAFAC class OBG-HflX-like GTPase superfamily. OBG GTPase family. As to quaternary structure, monomer. The cofactor is Mg(2+).

It localises to the cytoplasm. In terms of biological role, an essential GTPase which binds GTP, GDP and possibly (p)ppGpp with moderate affinity, with high nucleotide exchange rates and a fairly low GTP hydrolysis rate. Plays a role in control of the cell cycle, stress response, ribosome biogenesis and in those bacteria that undergo differentiation, in morphogenesis control. This is GTPase Obg from Corynebacterium urealyticum (strain ATCC 43042 / DSM 7109).